A 461-amino-acid polypeptide reads, in one-letter code: uncharacterized protein (461 aa).

LRR repeat units lie at residues 119–140 (NVKK…EKMS), 141–162 (LLEV…QHCK), and 163–184 (NLKE…EYLK). The LRRCT domain occupies 197–237 (NPCVGEGGQEYRRKVIRVLPNLTKLDDKPVTTTDHQEAIED).

This is an uncharacterized protein from Caenorhabditis elegans.